The chain runs to 130 residues: Small ribosomal subunit protein uS9 (130 aa).

The protein belongs to the universal ribosomal protein uS9 family.

This chain is Small ribosomal subunit protein uS9, found in Methylibium petroleiphilum (strain ATCC BAA-1232 / LMG 22953 / PM1).